A 432-amino-acid chain; its full sequence is D-amino acid dehydrogenase (432 aa).

FAD is bound at residue 3–17; sequence VVILGSGVVGVASAW.

This sequence belongs to the DadA oxidoreductase family. The cofactor is FAD.

It catalyses the reaction a D-alpha-amino acid + A + H2O = a 2-oxocarboxylate + AH2 + NH4(+). It participates in amino-acid degradation; D-alanine degradation; NH(3) and pyruvate from D-alanine: step 1/1. Its function is as follows. Oxidative deamination of D-amino acids. The sequence is that of D-amino acid dehydrogenase from Shigella dysenteriae serotype 1 (strain Sd197).